The primary structure comprises 117 residues: uncharacterized protein (117 aa).

The tract at residues 96–117 is disordered; sequence RKGGASKHRTLSAETGIRGEGE.

This is an uncharacterized protein from Saccharomyces cerevisiae (strain ATCC 204508 / S288c) (Baker's yeast).